A 65-amino-acid polypeptide reads, in one-letter code: Metallothionein-like protein 3B (65 aa).

The protein belongs to the metallothionein superfamily. Type 15 family.

Functionally, metallothioneins have a high content of cysteine residues that bind various heavy metals. The polypeptide is Metallothionein-like protein 3B (MT3B) (Oryza sativa subsp. indica (Rice)).